The chain runs to 172 residues: Cyclin-L1 (172 aa).

The disordered stretch occupies residues 1–36 (MASGPHSTATAAAAASSAAPSAGGSSSGTTTTTTTT). The segment at 88-168 (ELIQAAGILL…LRGKSDQLHL (81 aa)) is cyclin-like.

It belongs to the cyclin family. Cyclin L subfamily. In terms of assembly, interacts with POLR2A via its hyperphosphorylated C-terminal domain (CTD). Interacts with CDK11A, CDK11B, CDK12 and CDK13. May form a ternary complex with CDK11B and casein kinase II (CKII). Interacts with pre-mRNA-splicing factors, including at least SRSF1, SRSF2 and SRSF7/SLU7.

The protein resides in the nucleus speckle. It is found in the nucleus. It localises to the nucleoplasm. Its function is as follows. Involved in pre-mRNA splicing. Functions in association with cyclin-dependent kinases (CDKs). May play a role in the regulation of RNA polymerase II (pol II). Inhibited by the CDK-specific inhibitor CDKN1A/p21. In Pongo abelii (Sumatran orangutan), this protein is Cyclin-L1 (CCNL1).